A 536-amino-acid chain; its full sequence is Zinc finger CCCH domain-containing protein 18 (536 aa).

Residues 156–183 (EFPVKICHYFNKGFCKHGNNCRYFHGQI) form a C3H1-type zinc finger. In terms of domain architecture, HTH OST-type spans 211-294 (SLEKLEGEII…HGQHSVILAE (84 aa)). The region spanning 317-392 (RQIYLTFPAE…ARVLVKPYRE (76 aa)) is the RRM domain.

Possesses ribonuclease activity in vitro. This Arabidopsis thaliana (Mouse-ear cress) protein is Zinc finger CCCH domain-containing protein 18.